A 333-amino-acid polypeptide reads, in one-letter code: Holliday junction branch migration complex subunit RuvB (333 aa).

The interval 1–182 (MDERLLSGES…FGVLSRLEYY (182 aa)) is large ATPase domain (RuvB-L). ATP contacts are provided by residues Leu-21, Arg-22, Gly-63, Lys-66, Thr-67, Thr-68, 129–131 (EDF), Arg-172, Tyr-182, and Arg-219. Mg(2+) is bound at residue Thr-67. The interval 183–253 (TVDQLSAIVE…ITQMALELLQ (71 aa)) is small ATPAse domain (RuvB-S). The head domain (RuvB-H) stretch occupies residues 256 to 333 (KLGLDHIDHK…EHFGMEMPKV (78 aa)). Residues Arg-311 and Arg-316 each contribute to the DNA site.

Belongs to the RuvB family. Homohexamer. Forms an RuvA(8)-RuvB(12)-Holliday junction (HJ) complex. HJ DNA is sandwiched between 2 RuvA tetramers; dsDNA enters through RuvA and exits via RuvB. An RuvB hexamer assembles on each DNA strand where it exits the tetramer. Each RuvB hexamer is contacted by two RuvA subunits (via domain III) on 2 adjacent RuvB subunits; this complex drives branch migration. In the full resolvosome a probable DNA-RuvA(4)-RuvB(12)-RuvC(2) complex forms which resolves the HJ.

It is found in the cytoplasm. The catalysed reaction is ATP + H2O = ADP + phosphate + H(+). In terms of biological role, the RuvA-RuvB-RuvC complex processes Holliday junction (HJ) DNA during genetic recombination and DNA repair, while the RuvA-RuvB complex plays an important role in the rescue of blocked DNA replication forks via replication fork reversal (RFR). RuvA specifically binds to HJ cruciform DNA, conferring on it an open structure. The RuvB hexamer acts as an ATP-dependent pump, pulling dsDNA into and through the RuvAB complex. RuvB forms 2 homohexamers on either side of HJ DNA bound by 1 or 2 RuvA tetramers; 4 subunits per hexamer contact DNA at a time. Coordinated motions by a converter formed by DNA-disengaged RuvB subunits stimulates ATP hydrolysis and nucleotide exchange. Immobilization of the converter enables RuvB to convert the ATP-contained energy into a lever motion, pulling 2 nucleotides of DNA out of the RuvA tetramer per ATP hydrolyzed, thus driving DNA branch migration. The RuvB motors rotate together with the DNA substrate, which together with the progressing nucleotide cycle form the mechanistic basis for DNA recombination by continuous HJ branch migration. Branch migration allows RuvC to scan DNA until it finds its consensus sequence, where it cleaves and resolves cruciform DNA. In Bacillus mycoides (strain KBAB4) (Bacillus weihenstephanensis), this protein is Holliday junction branch migration complex subunit RuvB.